Consider the following 197-residue polypeptide: CRISPR system CMR subunit Cmr7 1 (197 aa).

This sequence belongs to the CRISPR system Cmr7 family. In terms of assembly, possible homodimer. Part of the CMR ribonucleoprotein complex, consisting of crRNA plus Cmr1/Cmr2/Cmr3/Cmr4/Cmr5/Cmr6 at 1:1 and possibly 3 Cmr7 dimers. A Cmr2/Cmr3/Cmr7 subcomplex without crRNA can also be isolated. It does not cleave target RNA.

Its subcellular location is the cytoplasm. CRISPR (clustered regularly interspaced short palindromic repeat) is an adaptive immune system that provides protection against mobile genetic elements (viruses, transposable elements and conjugative plasmids). CRISPR clusters contain spacers, sequences complementary to antecedent mobile elements, and target invading nucleic acids. CRISPR clusters are transcribed and processed into CRISPR RNA (crRNA). The CMR complex degrades RNA complementary to the crRNA (target RNA) within UA dinucleotides, generating 3'-OH and 5'-phosphate ends. Activity is dependent on the 8 nt long 5' tag in the crRNA, an unpaired 3' flag on the target RNA, and is stimulated by ATP. Some cleavage of the guide crRNA can also be observed. This Saccharolobus solfataricus (strain ATCC 35092 / DSM 1617 / JCM 11322 / P2) (Sulfolobus solfataricus) protein is CRISPR system CMR subunit Cmr7 1 (cmr7A).